We begin with the raw amino-acid sequence, 226 residues long: PKHD-type hydroxylase PSPA7_5129 (226 aa).

In terms of domain architecture, Fe2OG dioxygenase spans 78–178; that stretch reads KVFPPLFNCY…RYASFFWTQS (101 aa). The Fe cation site is built by histidine 96, aspartate 98, and histidine 159. Arginine 169 is a 2-oxoglutarate binding site.

Requires Fe(2+) as cofactor. L-ascorbate serves as cofactor.

This Pseudomonas paraeruginosa (strain DSM 24068 / PA7) (Pseudomonas aeruginosa (strain PA7)) protein is PKHD-type hydroxylase PSPA7_5129.